We begin with the raw amino-acid sequence, 426 residues long: 3-phosphoshikimate 1-carboxyvinyltransferase (426 aa).

The 3-phosphoshikimate site is built by Lys-22, Ser-23, and Arg-27. Lys-22 is a phosphoenolpyruvate binding site. Residues Gly-96 and Arg-124 each coordinate phosphoenolpyruvate. Residues Ser-170, Ser-171, Gln-172, Ser-198, Asp-314, Asn-337, and Lys-341 each coordinate 3-phosphoshikimate. A phosphoenolpyruvate-binding site is contributed by Gln-172. Asp-314 (proton acceptor) is an active-site residue. Arg-345, Arg-387, and Lys-412 together coordinate phosphoenolpyruvate.

This sequence belongs to the EPSP synthase family. As to quaternary structure, monomer.

Its subcellular location is the cytoplasm. The enzyme catalyses 3-phosphoshikimate + phosphoenolpyruvate = 5-O-(1-carboxyvinyl)-3-phosphoshikimate + phosphate. The protein operates within metabolic intermediate biosynthesis; chorismate biosynthesis; chorismate from D-erythrose 4-phosphate and phosphoenolpyruvate: step 6/7. Its function is as follows. Catalyzes the transfer of the enolpyruvyl moiety of phosphoenolpyruvate (PEP) to the 5-hydroxyl of shikimate-3-phosphate (S3P) to produce enolpyruvyl shikimate-3-phosphate and inorganic phosphate. The protein is 3-phosphoshikimate 1-carboxyvinyltransferase of Vibrio campbellii (strain ATCC BAA-1116).